A 117-amino-acid chain; its full sequence is Large ribosomal subunit protein uL18 (117 aa).

Belongs to the universal ribosomal protein uL18 family. As to quaternary structure, part of the 50S ribosomal subunit; part of the 5S rRNA/L5/L18/L25 subcomplex. Contacts the 5S and 23S rRNAs.

This is one of the proteins that bind and probably mediate the attachment of the 5S RNA into the large ribosomal subunit, where it forms part of the central protuberance. This Onion yellows phytoplasma (strain OY-M) protein is Large ribosomal subunit protein uL18.